Reading from the N-terminus, the 354-residue chain is UDP-3-O-acylglucosamine N-acyltransferase (354 aa).

Histidine 257 functions as the Proton acceptor in the catalytic mechanism. The segment at 335–354 (AQQVSKSKLRGRNPGGKQND) is disordered.

It belongs to the transferase hexapeptide repeat family. LpxD subfamily. As to quaternary structure, homotrimer.

It carries out the reaction a UDP-3-O-[(3R)-3-hydroxyacyl]-alpha-D-glucosamine + a (3R)-hydroxyacyl-[ACP] = a UDP-2-N,3-O-bis[(3R)-3-hydroxyacyl]-alpha-D-glucosamine + holo-[ACP] + H(+). It functions in the pathway bacterial outer membrane biogenesis; LPS lipid A biosynthesis. Functionally, catalyzes the N-acylation of UDP-3-O-acylglucosamine using 3-hydroxyacyl-ACP as the acyl donor. Is involved in the biosynthesis of lipid A, a phosphorylated glycolipid that anchors the lipopolysaccharide to the outer membrane of the cell. In Rhizobium etli (strain ATCC 51251 / DSM 11541 / JCM 21823 / NBRC 15573 / CFN 42), this protein is UDP-3-O-acylglucosamine N-acyltransferase.